The chain runs to 75 residues: MAEEGSELKEVIIGAPAMADTDRADTYVNDVRDSSQFFGRDARLYFGLNVNRFAGLACGMVFAGVLLVPLLLLAF.

The helical transmembrane segment at phenylalanine 53–leucine 73 threads the bilayer.

This sequence belongs to the MtrF family. The complex is composed of 8 subunits; MtrA, MtrB, MtrC, MtrD, MtrE, MtrF, MtrG and MtrH.

It is found in the cell membrane. The enzyme catalyses 5-methyl-5,6,7,8-tetrahydromethanopterin + coenzyme M + 2 Na(+)(in) = 5,6,7,8-tetrahydromethanopterin + methyl-coenzyme M + 2 Na(+)(out). The protein operates within one-carbon metabolism; methanogenesis from CO(2); methyl-coenzyme M from 5,10-methylene-5,6,7,8-tetrahydromethanopterin: step 2/2. In terms of biological role, part of a complex that catalyzes the formation of methyl-coenzyme M and tetrahydromethanopterin from coenzyme M and methyl-tetrahydromethanopterin. This is an energy-conserving, sodium-ion translocating step. The protein is Tetrahydromethanopterin S-methyltransferase subunit F of Methanopyrus kandleri (strain AV19 / DSM 6324 / JCM 9639 / NBRC 100938).